A 204-amino-acid chain; its full sequence is Recombination protein RecR (204 aa).

The C4-type zinc finger occupies 58–75 (CSVCQNVTDREEDPCSIC). The Toprim domain maps to 83 to 181 (TVICVVESPV…EVTKIARGIP (99 aa)).

This sequence belongs to the RecR family.

May play a role in DNA repair. It seems to be involved in an RecBC-independent recombinational process of DNA repair. It may act with RecF and RecO. The chain is Recombination protein RecR from Chlorobium luteolum (strain DSM 273 / BCRC 81028 / 2530) (Pelodictyon luteolum).